A 334-amino-acid chain; its full sequence is N-acetylmuramoyl-L-alanine amidase sle1 (334 aa).

A signal peptide spans 1–25 (MQKKVIAAIIGTSAISAVAATQANA). Residues 27–70 (TTHTVKPGESVWAISNKYGISIAKLKSLNNLTSNLIFPNQVLKV) form the LysM 1 domain. The segment covering 71 to 86 (SGSSNSTSNSSRPSTN) has biased composition (low complexity). The segment at 71-90 (SGSSNSTSNSSRPSTNSGGG) is disordered. The LysM 2 domain maps to 91-134 (SYYTVQAGDSLSLIASKYGTTYQNIMRLNGLNNFFIYPGQKLKV). The disordered stretch occupies residues 137–156 (TASSSNSTSNSSRPSTNSSG). The region spanning 158–201 (SYYTVQAGDSLSLIASKYGTTYQNIMRLNGLNNFFIYPGQKLKV) is the LysM 3 domain. The Peptidase C51 domain occupies 210-334 (GSTTTTNRGY…YQVNNYRYIH (125 aa)).

Its subcellular location is the secreted. It is found in the cell surface. It carries out the reaction Hydrolyzes the link between N-acetylmuramoyl residues and L-amino acid residues in certain cell-wall glycopeptides.. Its function is as follows. Peptidoglycan hydrolase involved in the splitting of the septum during cell division. The protein is N-acetylmuramoyl-L-alanine amidase sle1 (sle1) of Staphylococcus aureus (strain MRSA252).